Here is a 958-residue protein sequence, read N- to C-terminus: UvrABC system protein A (958 aa).

The ABC transporter 1 domain occupies 1–232 (MQSKSIKIQG…IETALKLGEG (232 aa)). 33-40 (GLSGSGKS) lines the ATP pocket. A C4-type zinc finger spans residues 252-279 (CPICGFSIGELEPRLFSFNSPFGACPSC). ABC transporter domains lie at 315-593 (QYYP…KYLS) and 604-935 (RRKP…GKYL). Position 639 to 646 (639 to 646 (GVSGSGKS)) interacts with ATP. Residues 738-764 (CEACRGDGILKIEMHFLPDVYVPCEVC) form a C4-type zinc finger.

Belongs to the ABC transporter superfamily. UvrA family. Forms a heterotetramer with UvrB during the search for lesions.

The protein resides in the cytoplasm. Its function is as follows. The UvrABC repair system catalyzes the recognition and processing of DNA lesions. UvrA is an ATPase and a DNA-binding protein. A damage recognition complex composed of 2 UvrA and 2 UvrB subunits scans DNA for abnormalities. When the presence of a lesion has been verified by UvrB, the UvrA molecules dissociate. In Oceanobacillus iheyensis (strain DSM 14371 / CIP 107618 / JCM 11309 / KCTC 3954 / HTE831), this protein is UvrABC system protein A.